The chain runs to 580 residues: Proline--tRNA ligase (580 aa).

Belongs to the class-II aminoacyl-tRNA synthetase family. ProS type 1 subfamily. Homodimer.

The protein localises to the cytoplasm. The catalysed reaction is tRNA(Pro) + L-proline + ATP = L-prolyl-tRNA(Pro) + AMP + diphosphate. Functionally, catalyzes the attachment of proline to tRNA(Pro) in a two-step reaction: proline is first activated by ATP to form Pro-AMP and then transferred to the acceptor end of tRNA(Pro). As ProRS can inadvertently accommodate and process non-cognate amino acids such as alanine and cysteine, to avoid such errors it has two additional distinct editing activities against alanine. One activity is designated as 'pretransfer' editing and involves the tRNA(Pro)-independent hydrolysis of activated Ala-AMP. The other activity is designated 'posttransfer' editing and involves deacylation of mischarged Ala-tRNA(Pro). The misacylated Cys-tRNA(Pro) is not edited by ProRS. This Polynucleobacter necessarius subsp. necessarius (strain STIR1) protein is Proline--tRNA ligase.